Consider the following 200-residue polypeptide: Probable GTP-binding protein EngB (200 aa).

The region spanning 25 to 199 is the EngB-type G domain; sequence SGYEVAFAGR…ISLLDRWYEW (175 aa). GTP contacts are provided by residues 33–40, 60–64, 78–81, 145–148, and 178–180; these read GRSNAGKS, GRTQL, DLPG, TKAD, and FSS. Mg(2+) contacts are provided by serine 40 and threonine 62.

It belongs to the TRAFAC class TrmE-Era-EngA-EngB-Septin-like GTPase superfamily. EngB GTPase family. Requires Mg(2+) as cofactor.

Functionally, necessary for normal cell division and for the maintenance of normal septation. This Legionella pneumophila (strain Corby) protein is Probable GTP-binding protein EngB.